A 99-amino-acid polypeptide reads, in one-letter code: Bacterial microcompartment protein homohexamer (99 aa).

Residues 4–88 (ALGMIEVRGF…PHVNVDAALP (85 aa)) form the BMC domain.

This sequence belongs to the bacterial microcompartments protein family. Homohexamer with a small central pore. When purified protein is examined by atomic force microscopy it dynamically makes uniform patches about 35 Angstroms thick with hexamers in the same orientation. In the BMC the concave side faces outward, with the N- and C-terminii exposed to the cytoplasm.

Its subcellular location is the bacterial microcompartment. Its function is as follows. The only hexameric shell protein in this bacterium, it forms the majority of the bacterial microcompartment (BMC) shell. Expression of 5 proteins in E.coli (BMC-H (Hoch_5815), BMC-P (Hoch_5814), and 3 BMC-T (Hoch_5812, Hoch_5816, Hoch_3341)) forms a 40 nm artificial BMC with a molecular mass of 6.5 MDa. There are 60 BMC-H hexamers per BMC. The shell facets are 20-30 Angstroms thick (a single hexamer layer), with 1 of BMC-T trimers protruding to the exterior. This chain is Bacterial microcompartment protein homohexamer, found in Haliangium ochraceum (strain DSM 14365 / JCM 11303 / SMP-2).